Reading from the N-terminus, the 696-residue chain is Ribonucleoside-diphosphate reductase subunit beta (696 aa).

Fe cation-binding residues include D97, E127, and H130. Y134 is a catalytic residue. Residues E194 and E228 each coordinate Fe cation. One can recognise a DOD-type homing endonuclease domain in the interval 377–507 (DGTIDSKRNG…FVQALCALGG (131 aa)). H577 is a Fe cation binding site.

This sequence belongs to the ribonucleoside diphosphate reductase small chain family. Tetramer of two alpha and two beta subunits. Fe cation is required as a cofactor. In terms of processing, this protein undergoes a protein self splicing that involves a post-translational excision of the intervening region (intein) followed by peptide ligation.

The catalysed reaction is a 2'-deoxyribonucleoside 5'-diphosphate + [thioredoxin]-disulfide + H2O = a ribonucleoside 5'-diphosphate + [thioredoxin]-dithiol. In terms of biological role, provides the precursors necessary for DNA synthesis. Catalyzes the biosynthesis of deoxyribonucleotides from the corresponding ribonucleotides. This is Ribonucleoside-diphosphate reductase subunit beta (nrdB) from Aquifex aeolicus (strain VF5).